A 485-amino-acid polypeptide reads, in one-letter code: Pyruvate kinase (485 aa).

Arg-33 contacts substrate. Residues Asn-35, Ser-37, Asp-67, and Thr-68 each contribute to the K(+) site. 35-38 contacts ATP; sequence NFSH. ATP is bound by residues Arg-74 and Lys-155. Glu-221 contributes to the Mg(2+) binding site. Substrate-binding residues include Gly-244, Asp-245, and Thr-277. Asp-245 is a Mg(2+) binding site.

Belongs to the pyruvate kinase family. Homotetramer. Requires Mg(2+) as cofactor. K(+) is required as a cofactor.

The catalysed reaction is pyruvate + ATP = phosphoenolpyruvate + ADP + H(+). It participates in carbohydrate degradation; glycolysis; pyruvate from D-glyceraldehyde 3-phosphate: step 5/5. The protein is Pyruvate kinase (pyk) of Chlamydia trachomatis serovar L2 (strain ATCC VR-902B / DSM 19102 / 434/Bu).